The chain runs to 599 residues: Translation initiation factor IF-2 (599 aa).

The tr-type G domain maps to 111–278; the sequence is PRPPIITVMG…SILLLAEILE (168 aa). Positions 120 to 127 are G1; that stretch reads GHVDHGKT. Residue 120–127 coordinates GTP; sequence GHVDHGKT. Positions 145 to 149 are G2; it reads GITQH. Positions 166–169 are G3; the sequence is DTPG. GTP-binding positions include 166-170 and 220-223; these read DTPGH and NKMD. Positions 220–223 are G4; sequence NKMD. The segment at 256-258 is G5; sequence SAL.

This sequence belongs to the TRAFAC class translation factor GTPase superfamily. Classic translation factor GTPase family. IF-2 subfamily.

Its subcellular location is the cytoplasm. Its function is as follows. One of the essential components for the initiation of protein synthesis. Protects formylmethionyl-tRNA from spontaneous hydrolysis and promotes its binding to the 30S ribosomal subunits. Also involved in the hydrolysis of GTP during the formation of the 70S ribosomal complex. This is Translation initiation factor IF-2 from Mesomycoplasma hyopneumoniae (strain 232) (Mycoplasma hyopneumoniae).